The following is a 529-amino-acid chain: uncharacterized protein (529 aa).

An N-terminal signal peptide occupies residues 1 to 20 (MYFLILILVLLLIMVAAATA).

This is an uncharacterized protein from Orgyia pseudotsugata multicapsid polyhedrosis virus (OpMNPV).